We begin with the raw amino-acid sequence, 420 residues long: Dual-specificity RNA methyltransferase RlmN (420 aa).

Catalysis depends on Glu115, which acts as the Proton acceptor. One can recognise a Radical SAM core domain in the interval Asp121–Asp388. A disulfide bridge links Cys128 with Cys393. Residues Cys135, Cys139, and Cys142 each contribute to the [4Fe-4S] cluster site. Residues Gly217–Glu218, Ser249, Ser271–His273, and Asn350 each bind S-adenosyl-L-methionine. The active-site S-methylcysteine intermediate is Cys393.

This sequence belongs to the radical SAM superfamily. RlmN family. [4Fe-4S] cluster serves as cofactor.

Its subcellular location is the cytoplasm. It catalyses the reaction adenosine(2503) in 23S rRNA + 2 reduced [2Fe-2S]-[ferredoxin] + 2 S-adenosyl-L-methionine = 2-methyladenosine(2503) in 23S rRNA + 5'-deoxyadenosine + L-methionine + 2 oxidized [2Fe-2S]-[ferredoxin] + S-adenosyl-L-homocysteine. It carries out the reaction adenosine(37) in tRNA + 2 reduced [2Fe-2S]-[ferredoxin] + 2 S-adenosyl-L-methionine = 2-methyladenosine(37) in tRNA + 5'-deoxyadenosine + L-methionine + 2 oxidized [2Fe-2S]-[ferredoxin] + S-adenosyl-L-homocysteine. Specifically methylates position 2 of adenine 2503 in 23S rRNA and position 2 of adenine 37 in tRNAs. m2A2503 modification seems to play a crucial role in the proofreading step occurring at the peptidyl transferase center and thus would serve to optimize ribosomal fidelity. This is Dual-specificity RNA methyltransferase RlmN from Sphingopyxis alaskensis (strain DSM 13593 / LMG 18877 / RB2256) (Sphingomonas alaskensis).